Here is a 370-residue protein sequence, read N- to C-terminus: Putative agmatine deiminase (370 aa).

Cysteine 361 serves as the catalytic Amidino-cysteine intermediate.

This sequence belongs to the agmatine deiminase family.

The catalysed reaction is agmatine + H2O = N-carbamoylputrescine + NH4(+). This chain is Putative agmatine deiminase, found in Shewanella putrefaciens (strain CN-32 / ATCC BAA-453).